A 612-amino-acid chain; its full sequence is MLIPHYLHQLQLCARNRTLTTAKALHAHIVKLGIVQCCPLANTLVNVYGKCGAASHALQVFDEMPHRDHIAWASVLTALNQANLSGKTLSVFSSVGSSSGLRPDDFVFSALVKACANLGSIDHGRQVHCHFIVSEYANDEVVKSSLVDMYAKCGLLNSAKAVFDSIRVKNTISWTAMVSGYAKSGRKEEALELFRILPVKNLYSWTALISGFVQSGKGLEAFSVFTEMRRERVDILDPLVLSSIVGACANLAASIAGRQVHGLVIALGFDSCVFISNALIDMYAKCSDVIAAKDIFSRMRHRDVVSWTSLIVGMAQHGQAEKALALYDDMVSHGVKPNEVTFVGLIYACSHVGFVEKGRELFQSMTKDYGIRPSLQHYTCLLDLLGRSGLLDEAENLIHTMPFPPDEPTWAALLSACKRQGRGQMGIRIADHLVSSFKLKDPSTYILLSNIYASASLWGKVSEARRKLGEMEVRKDPGHSSVEVRKETEVFYAGETSHPLKEDIFRLLKKLEEEMRIRNGYVPDTSWILHDMDEQEKEKLLFWHSERSAVAYGLLKAVPGTPIRIVKNLRVCGDCHVVLKHISEITEREIIVRDATRYHHFKGGKCSCNDFW.

The transit peptide at 1-24 directs the protein to the mitochondrion; the sequence is MLIPHYLHQLQLCARNRTLTTAKA. PPR repeat units lie at residues 37-71, 72-103, 104-138, 139-169, 170-204, 205-235, 237-271, 272-302, 303-337, 338-373, and 374-408; these read CCPLANTLVNVYGKCGAASHALQVFDEMPHRDHIA, WASVLTALNQANLSGKTLSVFSSVGSSSGLRP, DDFVFSALVKACANLGSIDHGRQVHCHFIVSEYAN, DEVVKSSLVDMYAKCGLLNSAKAVFDSIRVK, NTISWTAMVSGYAKSGRKEEALELFRILPVKNLYS, WTALISGFVQSGKGLEAFSVFTEMRRERVDI, DPLVLSSIVGACANLAASIAGRQVHGLVIALGFDS, CVFISNALIDMYAKCSDVIAAKDIFSRMRHR, DVVSWTSLIVGMAQHGQAEKALALYDDMVSHGVKP, NEVTFVGLIYACSHVGFVEKGRELFQSMTKDYGIRP, and SLQHYTCLLDLLGRSGLLDEAENLIHTMPFPPDEP. Residues 409–485 form a type E motif region; that stretch reads TWAALLSACK…DPGHSSVEVR (77 aa). The segment at 486–516 is type E(+) motif; the sequence is KETEVFYAGETSHPLKEDIFRLLKKLEEEMR. A type DYW motif region spans residues 518–612; the sequence is RNGYVPDTSW…GGKCSCNDFW (95 aa).

It belongs to the PPR family. PCMP-H subfamily. In terms of assembly, interacts with MORF8/RIP1 and MORF1/RIP8.

Its subcellular location is the mitochondrion. Its function is as follows. Involved in C-to-U editing of mitochondrial RNA. Required specifically for editing the mitochondrial NAD4, MT-CYB/COB and RPL16 transcripts. The chain is Pentatricopeptide repeat-containing protein At4g14050, mitochondrial (PCMP-H13) from Arabidopsis thaliana (Mouse-ear cress).